The primary structure comprises 127 residues: Large ribosomal subunit protein bL12 (127 aa).

The protein belongs to the bacterial ribosomal protein bL12 family. As to quaternary structure, homodimer. Part of the ribosomal stalk of the 50S ribosomal subunit. Forms a multimeric L10(L12)X complex, where L10 forms an elongated spine to which 2 to 4 L12 dimers bind in a sequential fashion. Binds GTP-bound translation factors.

Its function is as follows. Forms part of the ribosomal stalk which helps the ribosome interact with GTP-bound translation factors. Is thus essential for accurate translation. This chain is Large ribosomal subunit protein bL12, found in Phytoplasma mali (strain AT).